Reading from the N-terminus, the 165-residue chain is Photosystem I assembly protein Ycf3 (165 aa).

TPR repeat units follow at residues 32–65, 69–102, and 117–150; these read AFTYYRDGMSAQSEGNYAEALQNYYEAMRLEIDP, SYILYNIGLIHTSNGEHTKALEYYFRALERNPFL, and GEQAIRQGDSEIAEAWFDQAAEYWKQALTLTPGN.

The protein belongs to the Ycf3 family.

It localises to the plastid. The protein localises to the chloroplast thylakoid membrane. In terms of biological role, essential for the assembly of the photosystem I (PSI) complex. May act as a chaperone-like factor to guide the assembly of the PSI subunits. In Spinacia oleracea (Spinach), this protein is Photosystem I assembly protein Ycf3.